Consider the following 84-residue polypeptide: uncharacterized protein (84 aa).

Positions 2-84 (ARVTLRITGT…RAKGDIEIEM (83 aa)) constitute a 2Fe-2S ferredoxin-type domain. [2Fe-2S] cluster is bound by residues Cys37, Cys42, Cys45, and Cys74.

[2Fe-2S] cluster serves as cofactor.

This is an uncharacterized protein from Escherichia coli O6:H1 (strain CFT073 / ATCC 700928 / UPEC).